The following is a 210-amino-acid chain: Thymidylate kinase (210 aa).

An ATP-binding site is contributed by 10 to 17 (GPEGAGKS).

The protein belongs to the thymidylate kinase family.

It catalyses the reaction dTMP + ATP = dTDP + ADP. Functionally, phosphorylation of dTMP to form dTDP in both de novo and salvage pathways of dTTP synthesis. This is Thymidylate kinase from Pseudomonas putida (strain GB-1).